We begin with the raw amino-acid sequence, 476 residues long: Glycogen synthase (476 aa).

Lys15 serves as a coordination point for ADP-alpha-D-glucose.

Belongs to the glycosyltransferase 1 family. Bacterial/plant glycogen synthase subfamily.

It catalyses the reaction [(1-&gt;4)-alpha-D-glucosyl](n) + ADP-alpha-D-glucose = [(1-&gt;4)-alpha-D-glucosyl](n+1) + ADP + H(+). The protein operates within glycan biosynthesis; glycogen biosynthesis. Synthesizes alpha-1,4-glucan chains using ADP-glucose. This is Glycogen synthase from Yersinia pseudotuberculosis serotype O:1b (strain IP 31758).